A 235-amino-acid chain; its full sequence is Cytidylate kinase (235 aa).

An ATP-binding site is contributed by 16-24 (GPAASGKST).

The protein belongs to the cytidylate kinase family. Type 1 subfamily.

It is found in the cytoplasm. The catalysed reaction is CMP + ATP = CDP + ADP. It catalyses the reaction dCMP + ATP = dCDP + ADP. The chain is Cytidylate kinase from Chloroherpeton thalassium (strain ATCC 35110 / GB-78).